A 148-amino-acid chain; its full sequence is Probable glucosamine 6-phosphate N-acetyltransferase (148 aa).

Residues 3–148 (ISINELNFDD…KQMALYLNGK (146 aa)) form the N-acetyltransferase domain. Substrate-binding positions include Thr25, 72–75 (KFIH), and 84–86 (EDV). Acetyl-CoA contacts are provided by residues 86–88 (VVV) and 94–99 (LHGIGK). Substrate-binding positions include 115 to 116 (YK) and Asp120. 129-131 (YCK) contributes to the acetyl-CoA binding site. Residue Glu138 participates in substrate binding.

It belongs to the acetyltransferase family. GNA1 subfamily.

It carries out the reaction D-glucosamine 6-phosphate + acetyl-CoA = N-acetyl-D-glucosamine 6-phosphate + CoA + H(+). The protein operates within nucleotide-sugar biosynthesis; UDP-N-acetyl-alpha-D-glucosamine biosynthesis; N-acetyl-alpha-D-glucosamine 1-phosphate from alpha-D-glucosamine 6-phosphate (route I): step 1/2. The protein is Probable glucosamine 6-phosphate N-acetyltransferase of Acanthamoeba polyphaga (Amoeba).